The following is a 334-amino-acid chain: Protein-glutamate methylesterase/protein-glutamine glutaminase 1 (334 aa).

The Response regulatory domain maps to 2–120; it reads NIGIVNDLPL…GAAGDTTKLL (119 aa). Position 53 is a 4-aspartylphosphate (D53). In terms of domain architecture, CheB-type methylesterase spans 145-334; that stretch reads RAGGGPLIAI…AGELAALARI (190 aa). Active-site residues include S157, H184, and D277.

This sequence belongs to the CheB family. In terms of processing, phosphorylated by CheA. Phosphorylation of the N-terminal regulatory domain activates the methylesterase activity.

The protein localises to the cytoplasm. It catalyses the reaction [protein]-L-glutamate 5-O-methyl ester + H2O = L-glutamyl-[protein] + methanol + H(+). The enzyme catalyses L-glutaminyl-[protein] + H2O = L-glutamyl-[protein] + NH4(+). In terms of biological role, involved in chemotaxis. Part of a chemotaxis signal transduction system that modulates chemotaxis in response to various stimuli. Catalyzes the demethylation of specific methylglutamate residues introduced into the chemoreceptors (methyl-accepting chemotaxis proteins or MCP) by CheR. Also mediates the irreversible deamidation of specific glutamine residues to glutamic acid. This chain is Protein-glutamate methylesterase/protein-glutamine glutaminase 1, found in Burkholderia lata (strain ATCC 17760 / DSM 23089 / LMG 22485 / NCIMB 9086 / R18194 / 383).